A 208-amino-acid chain; its full sequence is Probable GTP-binding protein EngB (208 aa).

An EngB-type G domain is found at 23-205 (LTSEMVVLGR…RQTLLKYLLT (183 aa)). GTP is bound by residues 31-38 (GRSNVGKS), 57-61 (GKTRL), 84-87 (DLPG), 154-157 (TKFD), and 182-184 (FNA). The Mg(2+) site is built by S38 and T59.

Belongs to the TRAFAC class TrmE-Era-EngA-EngB-Septin-like GTPase superfamily. EngB GTPase family. Requires Mg(2+) as cofactor.

Functionally, necessary for normal cell division and for the maintenance of normal septation. The sequence is that of Probable GTP-binding protein EngB from Helicobacter acinonychis (strain Sheeba).